A 346-amino-acid polypeptide reads, in one-letter code: Selenide, water dikinase (346 aa).

The active site involves selenocysteine 16. Residue selenocysteine 16 is a non-standard amino acid, selenocysteine. ATP is bound by residues lysine 19 and 47-49; that span reads TAD. Position 50 (aspartate 50) interacts with Mg(2+). ATP-binding positions include aspartate 67, aspartate 90, and 138–140; that span reads GHS. Position 90 (aspartate 90) interacts with Mg(2+). A Mg(2+)-binding site is contributed by aspartate 226.

The protein belongs to the selenophosphate synthase 1 family. Class I subfamily. Homodimer. Requires Mg(2+) as cofactor.

It carries out the reaction hydrogenselenide + ATP + H2O = selenophosphate + AMP + phosphate + 2 H(+). Synthesizes selenophosphate from selenide and ATP. In Haemophilus influenzae (strain ATCC 51907 / DSM 11121 / KW20 / Rd), this protein is Selenide, water dikinase.